A 750-amino-acid chain; its full sequence is Photosystem I P700 chlorophyll a apoprotein A1 (750 aa).

A run of 8 helical transmembrane segments spans residues 70-93 (VFSA…FHGA), 156-179 (LYCT…FHYH), 195-219 (LNHH…HVSL), 291-309 (IAHH…GHMY), 346-369 (WHAQ…HHMY), 385-411 (LSLF…IFMV), 433-455 (AIIS…LYIH), and 531-549 (FLVH…LILL). [4Fe-4S] cluster is bound by residues C573 and C582. 2 helical membrane passes run 589-610 (HVFL…HFSW) and 664-686 (LSAY…MFLF). Residue H675 participates in chlorophyll a' binding. Residues M683 and Y691 each contribute to the chlorophyll a site. Residue W692 coordinates phylloquinone. A helical transmembrane segment spans residues 724–744 (AVGVTHYLLGGIATTWAFFLA).

This sequence belongs to the PsaA/PsaB family. In terms of assembly, the PsaA/B heterodimer binds the P700 chlorophyll special pair and subsequent electron acceptors. PSI consists of a core antenna complex that captures photons, and an electron transfer chain that converts photonic excitation into a charge separation. The eukaryotic PSI reaction center is composed of at least 11 subunits. It depends on P700 is a chlorophyll a/chlorophyll a' dimer, A0 is one or more chlorophyll a, A1 is one or both phylloquinones and FX is a shared 4Fe-4S iron-sulfur center. as a cofactor.

It localises to the plastid. The protein resides in the chloroplast thylakoid membrane. The enzyme catalyses reduced [plastocyanin] + hnu + oxidized [2Fe-2S]-[ferredoxin] = oxidized [plastocyanin] + reduced [2Fe-2S]-[ferredoxin]. PsaA and PsaB bind P700, the primary electron donor of photosystem I (PSI), as well as the electron acceptors A0, A1 and FX. PSI is a plastocyanin-ferredoxin oxidoreductase, converting photonic excitation into a charge separation, which transfers an electron from the donor P700 chlorophyll pair to the spectroscopically characterized acceptors A0, A1, FX, FA and FB in turn. Oxidized P700 is reduced on the lumenal side of the thylakoid membrane by plastocyanin. In Amborella trichopoda, this protein is Photosystem I P700 chlorophyll a apoprotein A1.